A 289-amino-acid polypeptide reads, in one-letter code: MELLPPPLRDMEVTEGSLCAFPTPDDFYDDPCFNTSDMSFFEDLDPRLVHVTLLKPEEPHHNEDEHVRAPSGHHQAGRCLLWACKACKRKTTNADRRKAATMRERRRLSKVNEAFETLKRYTSTNPNQRLPKVEILRNAIRYIESLQALLHDQDEAFYPVLEHYSGDSDASSPRSNCSDGMMDYNSPPCGSRRRNSYDSSFYSDSPNDSRLGKSSVISSLDCLSSIVERISTQSPSCPVPTAVDSGSEGSPCSPLQGETLSERVITIPSPSNTCTQLSQDPSSTIYHVL.

In terms of domain architecture, bHLH spans 95-146 (DRRKAATMRERRRLSKVNEAFETLKRYTSTNPNQRLPKVEILRNAIRYIESL). A disordered region spans residues 165–212 (SGDSDASSPRSNCSDGMMDYNSPPCGSRRRNSYDSSFYSDSPNDSRLG). Polar residues-rich tracts occupy residues 168-178 (SDASSPRSNCS) and 197-208 (YDSSFYSDSPND).

In terms of assembly, efficient DNA binding requires dimerization with another bHLH protein.

It localises to the nucleus. Its function is as follows. May act as a transcriptional activator that promotes transcription of muscle-specific target genes and plays a role in muscle differentiation. The sequence is that of Myoblast determination protein 1 homolog A (myod1-a) from Xenopus laevis (African clawed frog).